The sequence spans 240 residues: Splicing factor rtf2 (240 aa).

2 disordered regions span residues 1 to 22 (MGND…GKVP) and 181 to 240 (SLNK…RVKI). Basic residues predominate over residues 185–210 (ASKKSNKNGDKKRKHVSKSNSKHAKH). Basic and acidic residues-rich tracts occupy residues 211–224 (ELRT…ENVK) and 231–240 (DMERVKRVKI).

Belongs to the rtf2 family. In terms of assembly, interacts with pcn1.

It localises to the nucleus. Its function is as follows. Putative splicing factor that is required for the correct splicing of a subset of pre-mRNAs. Required for the correct splicing of rtf1, a replication termination factor that mediates site-specific replication termination at replication barrier RTS1. The chain is Splicing factor rtf2 from Schizosaccharomyces pombe (strain 972 / ATCC 24843) (Fission yeast).